Consider the following 361-residue polypeptide: 1-deoxy-D-xylulose 5-phosphate reductoisomerase (361 aa).

NADPH-binding residues include threonine 12, glycine 13, serine 14, isoleucine 15, glycine 38, and asparagine 102. Lysine 103 provides a ligand contact to 1-deoxy-D-xylulose 5-phosphate. Glutamate 104 contacts NADPH. Aspartate 126 is a binding site for Mn(2+). Residues serine 127, glutamate 128, serine 152, and histidine 175 each coordinate 1-deoxy-D-xylulose 5-phosphate. A Mn(2+)-binding site is contributed by glutamate 128. Residue glycine 181 coordinates NADPH. 1-deoxy-D-xylulose 5-phosphate-binding residues include serine 188, asparagine 193, lysine 194, and glutamate 197. Glutamate 197 contributes to the Mn(2+) binding site.

This sequence belongs to the DXR family. Requires Mg(2+) as cofactor. The cofactor is Mn(2+).

The enzyme catalyses 2-C-methyl-D-erythritol 4-phosphate + NADP(+) = 1-deoxy-D-xylulose 5-phosphate + NADPH + H(+). Its pathway is isoprenoid biosynthesis; isopentenyl diphosphate biosynthesis via DXP pathway; isopentenyl diphosphate from 1-deoxy-D-xylulose 5-phosphate: step 1/6. Its function is as follows. Catalyzes the NADPH-dependent rearrangement and reduction of 1-deoxy-D-xylulose-5-phosphate (DXP) to 2-C-methyl-D-erythritol 4-phosphate (MEP). In Leifsonia xyli subsp. xyli (strain CTCB07), this protein is 1-deoxy-D-xylulose 5-phosphate reductoisomerase.